We begin with the raw amino-acid sequence, 235 residues long: Elongation factor Tu, chloroplastic (235 aa).

Positions 1-125 (KNMITGAAQM…EVDNYIPLPT (125 aa)) constitute a tr-type G domain. Residue 47–50 (NKAD) participates in GTP binding.

It belongs to the TRAFAC class translation factor GTPase superfamily. Classic translation factor GTPase family. EF-Tu/EF-1A subfamily.

It is found in the plastid. It localises to the chloroplast. The enzyme catalyses GTP + H2O = GDP + phosphate + H(+). In terms of biological role, GTP hydrolase that promotes the GTP-dependent binding of aminoacyl-tRNA to the A-site of ribosomes during protein biosynthesis. This is Elongation factor Tu, chloroplastic (tufA) from Bryopsis plumosa (Green alga).